A 146-amino-acid chain; its full sequence is Hemoglobin subunit beta (146 aa).

Val1 carries the N-acetylvaline modification. Positions 2–146 (HLTPEEKNAV…VANALAHKYH (145 aa)) constitute a Globin domain. Residue Thr12 is modified to Phosphothreonine. Ser44 carries the phosphoserine modification. Lys59 carries the post-translational modification N6-acetyllysine. His63 provides a ligand contact to heme b. An N6-acetyllysine modification is found at Lys82. His92 contacts heme b. Position 93 is an S-nitrosocysteine (Cys93). The residue at position 144 (Lys144) is an N6-acetyllysine.

Belongs to the globin family. As to quaternary structure, heterotetramer of two alpha chains and two beta chains. As to expression, red blood cells.

In terms of biological role, involved in oxygen transport from the lung to the various peripheral tissues. This is Hemoglobin subunit beta (HBB) from Macaca mulatta (Rhesus macaque).